Here is a 315-residue protein sequence, read N- to C-terminus: Glutaminase (315 aa).

The substrate site is built by Ser70, Asn120, Glu166, Asn173, Tyr197, Tyr249, and Val267.

The protein belongs to the glutaminase family. In terms of assembly, homotetramer.

The enzyme catalyses L-glutamine + H2O = L-glutamate + NH4(+). The protein is Glutaminase of Mesorhizobium japonicum (strain LMG 29417 / CECT 9101 / MAFF 303099) (Mesorhizobium loti (strain MAFF 303099)).